We begin with the raw amino-acid sequence, 161 residues long: Ribonuclease H (161 aa).

The 142-residue stretch at 3–144 (GLKQISIYTD…CDDLARQAAE (142 aa)) folds into the RNase H type-1 domain. Residues D12, E50, D72, and D136 each coordinate Mg(2+). The disordered stretch occupies residues 133–161 (ERCDDLARQAAEAKPSQEDSGYINQQAQA). Residues 150–161 (EDSGYINQQAQA) show a composition bias toward polar residues.

Belongs to the RNase H family. Monomer. Requires Mg(2+) as cofactor.

The protein localises to the cytoplasm. The catalysed reaction is Endonucleolytic cleavage to 5'-phosphomonoester.. Endonuclease that specifically degrades the RNA of RNA-DNA hybrids. This chain is Ribonuclease H, found in Shewanella halifaxensis (strain HAW-EB4).